A 408-amino-acid chain; its full sequence is Mitochondrial outer membrane protein SLC25A46 (408 aa).

Disordered stretches follow at residues 1–23 (MHPR…EEPC) and 52–80 (HWGE…LGAG). Over residues 66–76 (LGAAGLNEEPG) the composition is skewed to low complexity. A Solcar 1 repeat occupies 86–177 (QLNRFAGFGI…GIISEFTPLP (92 aa)). 6 helical membrane-spanning segments follow: residues 93–113 (FGIG…CIVL), 157–177 (FIVQ…TPLP), 189–209 (IGGH…FYSA), 248–268 (LLPL…HYVI), 304–324 (FPEL…LYPL), and 373–393 (LGFY…VAVL). One copy of the Solcar 2 repeat lies at 301 to 403 (DAYFPELIAS…QLTKIIYSTL (103 aa)).

This sequence belongs to the mitochondrial carrier (TC 2.A.29) family.

It is found in the mitochondrion outer membrane. Functionally, transmembrane protein of the mitochondrial outer membrane that controls mitochondrial organization. May regulate the assembly of the MICOS (mitochondrial contact site and cristae organizing system) complex which is essential to the biogenesis and dynamics of mitochondrial cristae, the inwards folds of the inner mitochondrial membrane. Through its interaction with the EMC (endoplasmic reticulum membrane protein complex), could regulate mitochondrial lipid homeostasis and thereby mitochondrial fission. This is Mitochondrial outer membrane protein SLC25A46 from Gallus gallus (Chicken).